Reading from the N-terminus, the 701-residue chain is Ribosomal RNA large subunit methyltransferase K/L (701 aa).

The region spanning 43–154 (LLYQSLMWSR…KETAHISLDL (112 aa)) is the THUMP domain.

Belongs to the methyltransferase superfamily. RlmKL family.

It localises to the cytoplasm. The enzyme catalyses guanosine(2445) in 23S rRNA + S-adenosyl-L-methionine = N(2)-methylguanosine(2445) in 23S rRNA + S-adenosyl-L-homocysteine + H(+). It carries out the reaction guanosine(2069) in 23S rRNA + S-adenosyl-L-methionine = N(2)-methylguanosine(2069) in 23S rRNA + S-adenosyl-L-homocysteine + H(+). In terms of biological role, specifically methylates the guanine in position 2445 (m2G2445) and the guanine in position 2069 (m7G2069) of 23S rRNA. The chain is Ribosomal RNA large subunit methyltransferase K/L from Klebsiella pneumoniae (strain 342).